The following is a 407-amino-acid chain: NADH dehydrogenase [ubiquinone] 1 alpha subcomplex subunit 10, mitochondrial (407 aa).

The N-terminal 60 residues, 1 to 60 (MTAVFRVGLVRLVSRATQSPNLLQAQTNALPAAFQQRCSISGKTMRGGPRVPKAAPYPYK), are a transit peptide targeting the mitochondrion.

Belongs to the complex I NDUFA10 subunit family. In terms of assembly, complex I is composed of 45 different subunits. This a component of the hydrophobic protein fraction. Forms a complex including sicily, ND-42 and Hsp83; the complex is necessary to chaperone ND-42 in the cytoplasm before mitochondrial import; the interaction between sicily and ND-42 is direct and occurs preferably between the unprocessed forms in the cytoplasm. The cofactor is FAD. As to expression, expressed in muscles (at protein level).

It localises to the mitochondrion matrix. The protein localises to the cytoplasm. In terms of biological role, accessory subunit of the mitochondrial membrane respiratory chain NADH dehydrogenase (Complex I), that is believed not to be involved in catalysis. Complex I functions in the transfer of electrons from NADH to the respiratory chain. The immediate electron acceptor for the enzyme is believed to be ubiquinone. The protein is NADH dehydrogenase [ubiquinone] 1 alpha subcomplex subunit 10, mitochondrial of Drosophila melanogaster (Fruit fly).